A 256-amino-acid chain; its full sequence is Acetyl-coenzyme A carboxylase carboxyl transferase subunit alpha (256 aa).

A CoA carboxyltransferase C-terminal domain is found at 1–236; it reads MTDVARILKE…RSHLIDEITQ (236 aa).

This sequence belongs to the AccA family. Acetyl-CoA carboxylase is a heterohexamer composed of biotin carboxyl carrier protein (AccB), biotin carboxylase (AccC) and two subunits each of ACCase subunit alpha (AccA) and ACCase subunit beta (AccD).

The protein resides in the cytoplasm. The catalysed reaction is N(6)-carboxybiotinyl-L-lysyl-[protein] + acetyl-CoA = N(6)-biotinyl-L-lysyl-[protein] + malonyl-CoA. It participates in lipid metabolism; malonyl-CoA biosynthesis; malonyl-CoA from acetyl-CoA: step 1/1. Functionally, component of the acetyl coenzyme A carboxylase (ACC) complex. First, biotin carboxylase catalyzes the carboxylation of biotin on its carrier protein (BCCP) and then the CO(2) group is transferred by the carboxyltransferase to acetyl-CoA to form malonyl-CoA. The sequence is that of Acetyl-coenzyme A carboxylase carboxyl transferase subunit alpha from Streptococcus equi subsp. zooepidemicus (strain MGCS10565).